A 1171-amino-acid polypeptide reads, in one-letter code: 7,8-linoleate diol synthase (1171 aa).

The span at 1 to 22 shows a compositional bias: low complexity; sequence MASSSSSGSSTRSSSPSDPPSS. Residues 1 to 56 are disordered; sequence MASSSSSGSSTRSSSPSDPPSSFFQKLGAFLGLFSKPQPPRPDYPHAPGNSAREEQ. A fatty acid alpha-dioxygenase region spans residues 114 to 457; sequence TDGLITGLWE…DGSFEDEGLI (344 aa). His213 lines the heme b pocket. Positions 214, 229, 231, 233, and 235 each coordinate Ca(2+). Tyr385 is a catalytic residue. Residue His388 participates in heme b binding. Positions 675–1171 are epoxy alcohol synthase; the sequence is KILNNQKDFK…PMNMKIRWDD (497 aa). The interval 873–900 is disordered; it reads GLANGGANGHANGNANGHTNGNGIHQNG. Positions 881 to 895 are enriched in low complexity; the sequence is GHANGNANGHTNGNG. Cys1089 contacts heme.

This sequence in the N-terminal section; belongs to the peroxidase family. It in the C-terminal section; belongs to the cytochrome P450 family. As to quaternary structure, homotetramer. Requires heme b as cofactor. It depends on Ca(2+) as a cofactor. Heme serves as cofactor.

The enzyme catalyses (9Z,12Z)-octadecadienoate + O2 = (8R,9Z,12Z)-8-hydroperoxyoctadeca-9,12-dienoate. The catalysed reaction is (8R,9Z,12Z)-8-hydroperoxyoctadeca-9,12-dienoate = (7S,8S,9Z,12Z)-7,8-dihydroxyoctadeca-9,12-dienoate. Its function is as follows. 7,8-linoleate diol synthase is a bifunctional enzyme that converts linoleic acid (18:2n-6) into 8-hydroperoxy-8(E),12(Z)-octadecadienoic acid (8-HPODE) and then catalyzes the isomerization of the resulting hydroperoxide to 7,8-dihydroxy-9(Z),12(Z)-octadecadienoic acid (7,8-DiHODE). The sequence is that of 7,8-linoleate diol synthase from Pyricularia oryzae (strain 70-15 / ATCC MYA-4617 / FGSC 8958) (Rice blast fungus).